The primary structure comprises 412 residues: DNA polymerase IV 2 (412 aa).

A UmuC domain is found at 7 to 192; it reads IFLVDMQSFY…LPVGSMFGVG (186 aa). Residues Asp11 and Asp107 each coordinate Mg(2+). Glu108 is a catalytic residue.

Belongs to the DNA polymerase type-Y family. In terms of assembly, monomer. The cofactor is Mg(2+).

The protein resides in the cytoplasm. The enzyme catalyses DNA(n) + a 2'-deoxyribonucleoside 5'-triphosphate = DNA(n+1) + diphosphate. Its function is as follows. Poorly processive, error-prone DNA polymerase involved in untargeted mutagenesis. Copies undamaged DNA at stalled replication forks, which arise in vivo from mismatched or misaligned primer ends. These misaligned primers can be extended by PolIV. Exhibits no 3'-5' exonuclease (proofreading) activity. May be involved in translesion synthesis (TSL), in conjunction with the beta clamp from PolIII. The sequence is that of DNA polymerase IV 2 (dinB2) from Bacillus subtilis (strain 168).